We begin with the raw amino-acid sequence, 435 residues long: Adenylosuccinate synthetase (435 aa).

GTP contacts are provided by residues 11–17 (GDEGKGK) and 39–41 (GHT). The active-site Proton acceptor is the D12. Mg(2+)-binding residues include D12 and G39. Residues 12–15 (DEGK), 37–40 (NAGH), T134, R148, N230, T245, and R309 contribute to the IMP site. H40 acts as the Proton donor in catalysis. Position 305–311 (305–311 (VTTGRKR)) interacts with substrate. GTP contacts are provided by residues R311, 337 to 339 (KLD), and 419 to 421 (GTG).

The protein belongs to the adenylosuccinate synthetase family. Homodimer. Requires Mg(2+) as cofactor.

Its subcellular location is the cytoplasm. It catalyses the reaction IMP + L-aspartate + GTP = N(6)-(1,2-dicarboxyethyl)-AMP + GDP + phosphate + 2 H(+). Its pathway is purine metabolism; AMP biosynthesis via de novo pathway; AMP from IMP: step 1/2. In terms of biological role, plays an important role in the de novo pathway and in the salvage pathway of purine nucleotide biosynthesis. Catalyzes the first committed step in the biosynthesis of AMP from IMP. The sequence is that of Adenylosuccinate synthetase from Zygosaccharomyces rouxii (strain ATCC 2623 / CBS 732 / NBRC 1130 / NCYC 568 / NRRL Y-229).